A 257-amino-acid polypeptide reads, in one-letter code: Pyridoxine/pyridoxamine 5'-phosphate oxidase (257 aa).

33–36 (RIKY) serves as a coordination point for substrate. 90-93 (RFVL) contacts FMN. Lys-95 serves as a coordination point for pyridoxal 5'-phosphate. Residues 105 to 106 (YT) and Lys-112 each bind FMN. Pyridoxal 5'-phosphate contacts are provided by Tyr-152, Arg-156, and Ser-160. Residues 169–170 (QS) and Trp-216 each bind FMN. 222-224 (RLH) contacts substrate. Arg-226 provides a ligand contact to FMN.

The protein belongs to the pyridoxamine 5'-phosphate oxidase family. In terms of assembly, homodimer. The cofactor is FMN. As to expression, expressed in silk gland and fat body of the larva.

It catalyses the reaction pyridoxamine 5'-phosphate + O2 + H2O = pyridoxal 5'-phosphate + H2O2 + NH4(+). The enzyme catalyses pyridoxine 5'-phosphate + O2 = pyridoxal 5'-phosphate + H2O2. Its pathway is cofactor metabolism; pyridoxal 5'-phosphate salvage; pyridoxal 5'-phosphate from pyridoxamine 5'-phosphate: step 1/1. It participates in cofactor metabolism; pyridoxal 5'-phosphate salvage; pyridoxal 5'-phosphate from pyridoxine 5'-phosphate: step 1/1. Its function is as follows. Catalyzes the oxidation of either pyridoxine 5'-phosphate (PNP) or pyridoxamine 5'-phosphate (PMP) into pyridoxal 5'-phosphate (PLP). In Bombyx mori (Silk moth), this protein is Pyridoxine/pyridoxamine 5'-phosphate oxidase.